Consider the following 225-residue polypeptide: UPF0758 protein BCQ_4241 (225 aa).

The MPN domain maps to 103–225; it reads SIRSPEDCAR…FVSLKEKGHI (123 aa). Zn(2+) contacts are provided by His174, His176, and Asp187. The JAMM motif motif lies at 174-187; the sequence is HNHPSGDPAPSRED.

Belongs to the UPF0758 family.

This is UPF0758 protein BCQ_4241 from Bacillus cereus (strain Q1).